A 376-amino-acid chain; its full sequence is Growth/differentiation factor 8 (376 aa).

An N-terminal signal peptide occupies residues 1–24 (MMQKLQMYVYIYLFMLIAAGPVDL). The propeptide occupies 25–267 (NEGSEREENV…VTDTPKRSRR (243 aa)). Asn-72 is a glycosylation site (N-linked (GlcNAc...) asparagine). Cystine bridges form between Cys-273–Cys-283, Cys-282–Cys-341, Cys-310–Cys-373, and Cys-314–Cys-375.

This sequence belongs to the TGF-beta family. As to quaternary structure, homodimer; disulfide-linked. Interacts with WFIKKN2, leading to inhibit its activity. Interacts with FSTL3. Synthesized as large precursor molecule that undergoes proteolytic cleavage to generate an N-terminal propeptide and a disulfide linked C-terminal dimer, which is the biologically active molecule. The circulating form consists of a latent complex of the C-terminal dimer and other proteins, including its propeptide, which maintain the C-terminal dimer in a latent, inactive state. Ligand activation requires additional cleavage of the prodomain by a tolloid-like metalloproteinase. Expressed specifically in developing and adult skeletal muscle. Weak expression in adipose tissue.

It is found in the secreted. Its function is as follows. Acts specifically as a negative regulator of skeletal muscle growth. The protein is Growth/differentiation factor 8 (Mstn) of Mus musculus (Mouse).